Reading from the N-terminus, the 162-residue chain is NADH-quinone oxidoreductase subunit I (162 aa).

4Fe-4S ferredoxin-type domains are found at residues 53 to 83 (LRRY…IDSA) and 93 to 122 (TRYD…ETHI). [4Fe-4S] cluster contacts are provided by Cys-63, Cys-66, Cys-69, Cys-73, Cys-102, Cys-105, Cys-108, and Cys-112.

The protein belongs to the complex I 23 kDa subunit family. As to quaternary structure, NDH-1 is composed of 14 different subunits. Subunits NuoA, H, J, K, L, M, N constitute the membrane sector of the complex. Requires [4Fe-4S] cluster as cofactor.

The protein localises to the cell inner membrane. The catalysed reaction is a quinone + NADH + 5 H(+)(in) = a quinol + NAD(+) + 4 H(+)(out). Functionally, NDH-1 shuttles electrons from NADH, via FMN and iron-sulfur (Fe-S) centers, to quinones in the respiratory chain. The immediate electron acceptor for the enzyme in this species is believed to be ubiquinone. Couples the redox reaction to proton translocation (for every two electrons transferred, four hydrogen ions are translocated across the cytoplasmic membrane), and thus conserves the redox energy in a proton gradient. This chain is NADH-quinone oxidoreductase subunit I, found in Xanthomonas axonopodis pv. citri (strain 306).